The following is a 450-amino-acid chain: Tubulin beta-2 chain (450 aa).

Residues glutamine 11, glutamate 69, serine 138, glycine 142, threonine 143, glycine 144, asparagine 204, and asparagine 226 each coordinate GTP. Residue glutamate 69 participates in Mg(2+) binding. The tract at residues 428 to 450 (ATAEDDVDGYAEGEAGETYESEQ) is disordered. Acidic residues predominate over residues 429-450 (TAEDDVDGYAEGEAGETYESEQ).

This sequence belongs to the tubulin family. In terms of assembly, dimer of alpha and beta chains. A typical microtubule is a hollow water-filled tube with an outer diameter of 25 nm and an inner diameter of 15 nm. Alpha-beta heterodimers associate head-to-tail to form protofilaments running lengthwise along the microtubule wall with the beta-tubulin subunit facing the microtubule plus end conferring a structural polarity. Microtubules usually have 13 protofilaments but different protofilament numbers can be found in some organisms and specialized cells. It depends on Mg(2+) as a cofactor. Post-translationally, cleaved by caspase ced-3 in vitro.

The protein resides in the cytoplasm. It localises to the cytoskeleton. Its function is as follows. Tubulin is the major constituent of microtubules, a cylinder consisting of laterally associated linear protofilaments composed of alpha- and beta-tubulin heterodimers. Microtubules grow by the addition of GTP-tubulin dimers to the microtubule end, where a stabilizing cap forms. Below the cap, tubulin dimers are in GDP-bound state, owing to GTPase activity of alpha-tubulin. Required for the normal dynamic behavior of the non-centrosomal microtubules in the epidermal syncytium. Involved in the redistribution of microtubule end-binding protein EB1/ebp-2 caused by wounding. Required to modulate expression in the epidermis of antimicrobial peptides, such as nlp-29, after wounding, or fungal infection. In Caenorhabditis elegans, this protein is Tubulin beta-2 chain (tbb-2).